Here is a 96-residue protein sequence, read N- to C-terminus: Large ribosomal subunit protein bL27 (96 aa).

Residues 1–9 (MLRLDLQFF) constitute a propeptide that is removed on maturation. The disordered stretch occupies residues 13–35 (KGVGSTKNGRDSQSKRLGAKRAD).

The protein belongs to the bacterial ribosomal protein bL27 family. The N-terminus is cleaved by ribosomal processing cysteine protease Prp.

This is Large ribosomal subunit protein bL27 from Bacillus cereus (strain B4264).